The following is a 142-amino-acid chain: ATP synthase epsilon chain (142 aa).

The protein belongs to the ATPase epsilon chain family. F-type ATPases have 2 components, CF(1) - the catalytic core - and CF(0) - the membrane proton channel. CF(1) has five subunits: alpha(3), beta(3), gamma(1), delta(1), epsilon(1). CF(0) has three main subunits: a, b and c.

Its subcellular location is the cell inner membrane. Produces ATP from ADP in the presence of a proton gradient across the membrane. The chain is ATP synthase epsilon chain from Shewanella putrefaciens (strain CN-32 / ATCC BAA-453).